The sequence spans 339 residues: MTVRVAINGFGRIGRNVIRALYESGRRAEITVVAINELADAVGMAHLLKYDTSHGRFAWDVRQEREQLFVGDDAIRVLHEQSIDALPWRELGVDVVLDCTGVYGNREHGEAHLAAGAKKVLFSHPGGHDLDATVVYGVNHHELQAEHRIVSNASCTTNCIIPVIKLLDDAYGIESGTVTTIHSAMHDQQVIDAYHPDLRRTRAASQSIIPVDTKLAAGITRIFPQFNDRFEAIAVRVPTINVTAIDLSVTVKKPVKASEVNLLLQKAAQGSFHGIVDYTELPLVSVDFNHDPHSAIVDGTQTRVSGAHLIKTLVWCDNEWGFANRMLDTTLAMAAQGFR.

R12–I13 provides a ligand contact to NAD(+). Substrate-binding positions include S154–T156, R200, T213–K214, and R236. Catalysis depends on C155, which acts as the Nucleophile. N318 is an NAD(+) binding site.

Belongs to the glyceraldehyde-3-phosphate dehydrogenase family. Epd subfamily. Homotetramer.

The protein localises to the cytoplasm. The enzyme catalyses D-erythrose 4-phosphate + NAD(+) + H2O = 4-phospho-D-erythronate + NADH + 2 H(+). It functions in the pathway cofactor biosynthesis; pyridoxine 5'-phosphate biosynthesis; pyridoxine 5'-phosphate from D-erythrose 4-phosphate: step 1/5. Functionally, catalyzes the NAD-dependent conversion of D-erythrose 4-phosphate to 4-phosphoerythronate. The chain is D-erythrose-4-phosphate dehydrogenase from Enterobacter sp. (strain 638).